The sequence spans 399 residues: Enoyl-[acyl-carrier-protein] reductase [NADH] (399 aa).

NAD(+) is bound by residues 48–53 (GASTGY), 74–75 (FE), 111–112 (DA), and 139–140 (LA). Tyr225 serves as a coordination point for substrate. The active-site Proton donor is Tyr235. Residues Lys244 and 274-276 (VVT) contribute to the NAD(+) site.

It belongs to the TER reductase family. In terms of assembly, monomer.

The enzyme catalyses a 2,3-saturated acyl-[ACP] + NAD(+) = a (2E)-enoyl-[ACP] + NADH + H(+). Its pathway is lipid metabolism; fatty acid biosynthesis. In terms of biological role, involved in the final reduction of the elongation cycle of fatty acid synthesis (FAS II). Catalyzes the reduction of a carbon-carbon double bond in an enoyl moiety that is covalently linked to an acyl carrier protein (ACP). The protein is Enoyl-[acyl-carrier-protein] reductase [NADH] of Yersinia enterocolitica serotype O:8 / biotype 1B (strain NCTC 13174 / 8081).